The sequence spans 429 residues: Serine hydroxymethyltransferase (429 aa).

(6S)-5,6,7,8-tetrahydrofolate contacts are provided by residues Leu126 and 130 to 132 (GHL). Position 235 is an N6-(pyridoxal phosphate)lysine (Lys235). Residue 359–361 (SPF) coordinates (6S)-5,6,7,8-tetrahydrofolate.

Belongs to the SHMT family. As to quaternary structure, homodimer. Requires pyridoxal 5'-phosphate as cofactor.

It localises to the cytoplasm. The catalysed reaction is (6R)-5,10-methylene-5,6,7,8-tetrahydrofolate + glycine + H2O = (6S)-5,6,7,8-tetrahydrofolate + L-serine. Its pathway is one-carbon metabolism; tetrahydrofolate interconversion. The protein operates within amino-acid biosynthesis; glycine biosynthesis; glycine from L-serine: step 1/1. Catalyzes the reversible interconversion of serine and glycine with tetrahydrofolate (THF) serving as the one-carbon carrier. This reaction serves as the major source of one-carbon groups required for the biosynthesis of purines, thymidylate, methionine, and other important biomolecules. Also exhibits THF-independent aldolase activity toward beta-hydroxyamino acids, producing glycine and aldehydes, via a retro-aldol mechanism. The sequence is that of Serine hydroxymethyltransferase from Prochlorococcus marinus (strain MIT 9313).